The primary structure comprises 147 residues: uncharacterized protein (147 aa).

Residues 2–63 (LDELDKKIIG…KLNYENIGYD (62 aa)) enclose the HTH asnC-type domain. The H-T-H motif DNA-binding region spans 21-40 (YREIAKELNVAVGTIYNRIK).

This is an uncharacterized protein from Pyrococcus abyssi (strain GE5 / Orsay).